The following is a 321-amino-acid chain: Tetraacyldisaccharide 4'-kinase (321 aa).

ATP is bound at residue 54-61; that stretch reads SVGGTGKT.

This sequence belongs to the LpxK family.

It catalyses the reaction a lipid A disaccharide + ATP = a lipid IVA + ADP + H(+). It participates in glycolipid biosynthesis; lipid IV(A) biosynthesis; lipid IV(A) from (3R)-3-hydroxytetradecanoyl-[acyl-carrier-protein] and UDP-N-acetyl-alpha-D-glucosamine: step 6/6. Functionally, transfers the gamma-phosphate of ATP to the 4'-position of a tetraacyldisaccharide 1-phosphate intermediate (termed DS-1-P) to form tetraacyldisaccharide 1,4'-bis-phosphate (lipid IVA). This Rickettsia africae (strain ESF-5) protein is Tetraacyldisaccharide 4'-kinase.